The sequence spans 602 residues: Phosphoenolpyruvate carboxykinase [GTP] (602 aa).

Substrate contacts are provided by residues Arg89 and Tyr211 to Gly213. Positions 220 and 239 each coordinate Mn(2+). Ser260 is a binding site for substrate. Gly261 to Ser266 contacts GTP. Residue Ser262 is part of the active site. Asp277 is a Mn(2+) binding site. Asn367–Arg369 is a binding site for substrate. 2 residues coordinate GTP: Arg369 and Arg400.

It belongs to the phosphoenolpyruvate carboxykinase [GTP] family. Mn(2+) serves as cofactor.

It localises to the cytoplasm. The catalysed reaction is oxaloacetate + GTP = phosphoenolpyruvate + GDP + CO2. It functions in the pathway carbohydrate biosynthesis; gluconeogenesis. Its function is as follows. Catalyzes the conversion of oxaloacetate (OAA) to phosphoenolpyruvate (PEP), the rate-limiting step in the metabolic pathway that produces glucose from lactate and other precursors derived from the citric acid cycle. The protein is Phosphoenolpyruvate carboxykinase [GTP] of Sulfurisphaera tokodaii (strain DSM 16993 / JCM 10545 / NBRC 100140 / 7) (Sulfolobus tokodaii).